Here is a 536-residue protein sequence, read N- to C-terminus: Interferon alpha/beta receptor 2 (536 aa).

Residues 1-26 (MLLSQNVSAIGPLNLYPMVHISLVFG) form the signal peptide. Over 27 to 246 (ISYVVPDLSD…RESESSEPAT (220 aa)) the chain is Extracellular. Cystine bridges form between Cys-39–Cys-122 and Cys-85–Cys-93. Asn-58, Asn-87, Asn-101, Asn-147, and Asn-191 each carry an N-linked (GlcNAc...) asparagine glycan. An intrachain disulfide couples Cys-210 to Cys-230. A helical transmembrane segment spans residues 247–267 (IGGILILFLLAAVCISTVMIL). Residues 268 to 536 (KRIGYICLRN…VRQVNLKNFN (269 aa)) lie on the Cytoplasmic side of the membrane. The residue at position 340 (Tyr-340) is a Phosphotyrosine. 3 consecutive repeat copies span residues 358–362 (SLEDC), 363–367 (SLEDC), and 368–372 (SLEDC). Positions 358–372 (SLEDCSLEDCSLEDC) are 3 X 5 AA tandem repeats of S-L-E-D-C. A disordered region spans residues 369–434 (LEDCSDPSAE…SDSTEGSEGR (66 aa)). Residues 420 to 429 (TSEEDSDSTE) are compositionally biased toward acidic residues. The mediates interaction with STAT2 (and required for the recruitment of USP18) stretch occupies residues 432–456 (EGRIVFNVNLNSVCVRALEDDKDSE). The residue at position 480 (Ser-480) is a Phosphoserine. Positions 487–522 (EEGTQLPFTDPSMECLRPQDALSDKSDTSESDVDIG) are disordered. Tyr-525 is subject to Phosphotyrosine.

The protein belongs to the type II cytokine receptor family. In terms of assembly, heterodimer with IFNAR1; forming the receptor for type I interferon. Interacts with the transcriptional factors STAT1 and STAT2. Interacts with JAK1. Interacts with USP18; indirectly via STAT2, it negatively regulates the assembly of the ternary interferon-IFNAR1-IFNAR2 complex and therefore type I interferon signaling. Post-translationally, phosphorylated on tyrosine residues upon interferon binding. Phosphorylation at Tyr-340 or Tyr-525 are sufficient to mediate interferon dependent activation of STAT1, STAT2 and STAT3 leading to antiproliferative effects on many different cell types. As to expression, expressed in the endometrium. Expressed in all tissues examined except conceptus at day 15 of pregnancy.

The protein resides in the cell membrane. In terms of biological role, together with IFNAR1, forms the heterodimeric receptor for type I interferons (including interferons alpha, beta, epsilon, omega and kappa). Type I interferon binding activates the JAK-STAT signaling cascade, resulting in transcriptional activation or repression of interferon-regulated genes that encode the effectors of the interferon response. Mechanistically, type I interferon-binding brings the IFNAR1 and IFNAR2 subunits into close proximity with one another, driving their associated Janus kinases (JAKs) (TYK2 bound to IFNAR1 and JAK1 bound to IFNAR2) to cross-phosphorylate one another. The activated kinases phosphorylate specific tyrosine residues on the intracellular domains of IFNAR1 and IFNAR2, forming docking sites for the STAT transcription factors (STAT1, STAT2 and STAT). STAT proteins are then phosphorylated by the JAKs, promoting their translocation into the nucleus to regulate expression of interferon-regulated genes. The protein is Interferon alpha/beta receptor 2 (IFNAR2) of Ovis aries (Sheep).